A 545-amino-acid chain; its full sequence is Phospholipase B-like 1 (545 aa).

The signal sequence occupies residues 1-35; that stretch reads MSRHSQDERLGLPQPPALLPLLLLLLAVAVPLSQA. A glycan (N-linked (GlcNAc...) (high mannose) asparagine; alternate) is linked at N68. N-linked (GlcNAc...) (hybrid) asparagine; alternate glycosylation occurs at N68. The propeptide at 206–224 is removed in mature form; sequence LSPTKNSSLKFFKRWDMGH. N-linked (GlcNAc...) (high mannose) asparagine; alternate glycans are attached at residues N305, N363, and N408. N305, N363, and N408 each carry an N-linked (GlcNAc...) (hybrid) asparagine; alternate glycan. Disulfide bonds link C467–C472 and C471–C486. A glycan (N-linked (GlcNAc...) (high mannose) asparagine; alternate) is linked at N523. A glycan (N-linked (GlcNAc...) (hybrid) asparagine; alternate) is linked at N523.

This sequence belongs to the phospholipase B-like family. May form a homodimer, each monomer is composed of a chain A and a chain B. Post-translationally, the maturation cleavages that produces chains A and B are required to open the putative substrate binding pocket. Both chains A and B remain associated in the mature protein.

Its subcellular location is the lysosome. Functionally, exhibits a weak phospholipase activity, acting on various phospholipids, including phosphatidylcholine, phosphatidylinositol, phosphatidylethanolamine and lysophospholipids. However, in view of the small size of the putative binding pocket, it has been proposed that it may act rather as an amidase or a peptidase. This Bos taurus (Bovine) protein is Phospholipase B-like 1 (PLBD1).